The following is a 181-amino-acid chain: Immunity-related GTPase family M protein (181 aa).

Residues 32–181 (TPVNITMAGD…NLQKERVCEY (150 aa)) form the IRG-type G domain. GTP-binding positions include 41 to 48 (DSGNGMST), 66 to 70 (TELVK), and 147 to 149 (KLD).

It belongs to the TRAFAC class dynamin-like GTPase superfamily. IRG family. Interacts with ULK1; promoting the coassembly of ULK1 and BECN1. Interacts with BECN1; enhancing BECN1-interacting partners and influencing the composition of the BECN1 complex. Interacts with ATG16L1. Interacts with NOD2; promoting IRGM 'Lys-63'-linked polyubiquitination, which is required for interactions with the core autophagy factors. Interacts with STX17; promoting STX17 recruitment to autophagosomes. Interacts with ATG8 proteins (GABARAP, GABARAPL1, GABARAPL2, MAP1LC3A, MAP1LC3B and MAP1LC3C); promoting STX17 recruitment to autophagosomes. Interacts with TFEB; promoting association between TFEB and PPP3CB and TFEB dephosphorylation. Interacts with PPP3CB; promoting association between TFEB and PPP3CB and TFEB dephosphorylation. Interacts with NLRP3; preventing NLRP3 inflammasome assembly and promoting SQSTM1/p62-dependent autophagic degradation of NLRP3. Interacts with CGAS; promoting SQSTM1/p62-dependent autophagic degradation of CGAS. Interacts with RIGI/RIG-I; promoting SQSTM1/p62-dependent autophagic degradation of RIGI/RIG-I. Interacts with NOD1; promoting SQSTM1/p62-dependent autophagic degradation of RIGI/RIG-I. Interacts with NOD2; promoting SQSTM1/p62-dependent autophagic degradation of RIGI/RIG-I. Interacts with RIPK2; promoting SQSTM1/p62-dependent autophagic degradation of RIGI/RIG-I. Post-translationally, ubiquitinated via 'Lys-63'-linked polyubiquitination in a NOD2-dependent process. 'Lys-63'-linked polyubiquitination is required for interactions with the core autophagy factors. As to expression, widely expressed (at protein level). Expressed in several tissues including colon, small bowel and peripheral blood leukocytes.

The protein resides in the golgi apparatus membrane. It is found in the cell membrane. The protein localises to the cytoplasmic vesicle. Its subcellular location is the phagosome membrane. It localises to the autophagosome membrane. The protein resides in the lysosome membrane. It is found in the late endosome membrane. The protein localises to the mitochondrion membrane. Its subcellular location is the cell projection. It localises to the phagocytic cup. The protein resides in the mitochondrion. The enzyme catalyses GTP + H2O = GDP + phosphate + H(+). Immunity-related GTPase that plays important roles in innate immunity and inflammatory response. Acts as a dynamin-like protein that binds to intracellular membranes and promotes remodeling and trafficking of those membranes. Required for clearance of acute protozoan and bacterial infections by interacting with autophagy and lysosome regulatory proteins, thereby promoting the fusion of phagosomes with lysosomes for efficient degradation of cargo including microbes. Regulates selective autophagy, including xenophagy and mitophagy, both directly and indirectly. Directly regulates autophagy by acting as a molecular adapter that promotes the coassembly of the core autophagy machinery to mediate antimicrobial defense: IRGM (1) activates AMPK, which in turn phosphorylates ULK1 and BECN1 to induce autophagy, (2) promotes the coassembly of ULK1 and BECN1, enhancing BECN1-interacting partners and (3) influences the composition of the BECN1 complex, by competing with the negative regulators BCL2 and RUBCN, to trigger autophagy. Also activates autophagy by promoting recruitment of STX17 to autophagosomes. In collaboration with ATG8 proteins, regulate lysosomal biogenesis, a fundamental process for any autophagic pathway, by promoting TFEB dephosphorylation. Also modulates autophagy by assisting with autophagosome formation and preventing lysosomal deacidification. While activating autophagy, acts as a key negative regulator of the inflammatory and interferon responses both by (1) promoting mitophagy and (2) mediating autophagy-dependent degradation of effectors of the inflammatory response. Promotes degradation of damaged and IFNG/IFN-gamma-stressed mitochondria via mitophagy, preventing cytosolic release of ligands that activate inflammation. Acts as a suppressor of inflammation by promoting recruitment of inflammation effectors, such as CGAS, RIGI/RIG-I and NLRP3, to autophagosome membranes, leading to their SQSTM1/p62-dependent autophagic degradation. Also directly inhibits assembly of the NLRP3 inflammasome by preventing the association between NLRP3 and PYCARD. Acts as a negative regulator of antiviral innate immune response by suppressing the RIPK2-dependent pro-inflammatory response: mediates recruitment of RIPosomes, composed of RIPK2 and NOD1 or NOD2, to autophagosome membranes, promoting their SQSTM1/p62-dependent autophagic degradation. In terms of biological role, acts as a positive regulator of mitophagy in response to intracellular mycobacteria infection: specifically binds cardiolipin, leading to its translocation to mitochondria, where it promotes affected mitochondrial fission and mitophagy. Functionally, (Microbial infection) Following infection by hepatitis C virus (HCV), promotes HCV-triggered membrane remodeling, leading to autophagy and Golgi fragmentation, a step required for HCV replication. This is Immunity-related GTPase family M protein from Homo sapiens (Human).